The sequence spans 457 residues: Transcription factor CP2-like protein 1 (457 aa).

Residues 1–52 are mediate transcriptional repression; that stretch reads MLFWHTQPEHYNQHNSGSYLRDVLALPIFKQEEPQLSPENEARLPPLQYVLC. A Grh/CP2 DB domain is found at 43–280; the sequence is RLPPLQYVLC…PSPSYNGSPN (238 aa). 2 disordered regions span residues 219–245 and 271–301; these read KPKG…KEKY and PSPS…LPVG. A compositionally biased stretch (basic and acidic residues) spans 221–245; that stretch reads KGADRKQETDREKMEKRTAQEKEKY. An SAM2-like domain region spans residues 261-365; sequence PDVAYQVNSA…IRLFNAIKGR (105 aa). The segment covering 271–281 has biased composition (polar residues); that stretch reads PSPSYNGSPNS.

Belongs to the grh/CP2 family. CP2 subfamily. In terms of assembly, forms homohexamers via its SAM-like domain. Interacts with MTA1; which is indispensable for TFCP2L1-mediated self-renewal-promoting effect and endoderm-inhibiting action.

Its subcellular location is the nucleus. Its function is as follows. Transcription factor that facilitates establishment and maintenance of pluripotency in embryonic stem cells (ESCs). With KLF2, acts as the major effector of self-renewal that mediates induction of pluripotency downstream of LIF/STAT3 and Wnt/beta-catenin signaling. Required for normal duct development in the salivary gland and kidney. Coordinates the development of the kidney collecting ducts intercalated (IC) and principal (PC) cells, which regulate acid-base and salt-water homeostasis, respectively. Regulates the expression of IC genes including subunits B1 and D2 of the V-ATPase complex, OXGR1, CA12, SLC4A1, AQP6 and IC-specific transcription factor FOXI1. Also regulates the expression of JAG1 and subsequent notch signaling in the collecting duct. JAG1 initiates notch signaling in PCs but inhibits notch signaling in ICs. Acts as a transcriptional suppressor that may suppress UBP1-mediated transcriptional activation. Modulates the placental expression of CYP11A1. The protein is Transcription factor CP2-like protein 1 (TFCP2L1) of Pongo abelii (Sumatran orangutan).